The sequence spans 138 residues: Large ribosomal subunit protein uL16c (138 aa).

It belongs to the universal ribosomal protein uL16 family. In terms of assembly, part of the 50S ribosomal subunit.

The protein localises to the plastid. It is found in the chloroplast. The polypeptide is Large ribosomal subunit protein uL16c (Emiliania huxleyi (Coccolithophore)).